Reading from the N-terminus, the 85-residue chain is Contulakin-Lt1 (85 aa).

A signal peptide spans 1–22 (MRTAYWVMVMMMVGITAPLSEG). A propeptide spanning residues 23-60 (RKLNDAIRGLVADYLTPQLLQSLVSAPYPEFQLDDPNL) is cleaved from the precursor. A disulfide bridge links C65 with C70. Positions 76 to 85 (RRRDLKKRNK) are excised as a propeptide.

Belongs to the conotoxin C superfamily. Expressed by the venom duct.

The protein localises to the secreted. Functionally, acts as an agonist of neurotensin receptors. It binds to human neurotensin type 1 receptor (NTSR1), rat neurotensin types 1 and 2 receptors (NTSR1/NTSR2) and mouse neurotensin type 3 receptor (SORT1). This Conus litteratus (Lettered cone) protein is Contulakin-Lt1.